A 177-amino-acid chain; its full sequence is Adenylate kinase (177 aa).

13–18 (GCGKGT) is a binding site for ATP. The interval 33–62 (SSGDIIREEMKKSSKEATVIREMVNSGRLA) is NMP. AMP is bound by residues S34, R39, 60 to 62 (RLA), 85 to 88 (GYPR), and Q92. Residues 119–127 (GRNEGRDDD) are LID. Residue R120 participates in ATP binding. R124 and R135 together coordinate AMP.

It belongs to the adenylate kinase family. As to quaternary structure, monomer.

It is found in the cytoplasm. It carries out the reaction AMP + ATP = 2 ADP. In terms of biological role, catalyzes the reversible transfer of the terminal phosphate group between ATP and AMP. Plays an important role in cellular energy homeostasis and in adenine nucleotide metabolism. The sequence is that of Adenylate kinase from Encephalitozoon cuniculi (strain GB-M1) (Microsporidian parasite).